We begin with the raw amino-acid sequence, 474 residues long: Methylenetetrahydrofolate--tRNA-(uracil-5-)-methyltransferase TrmFO (474 aa).

Residue 9 to 14 coordinates FAD; it reads GGGLAG.

Belongs to the MnmG family. TrmFO subfamily. FAD is required as a cofactor.

It is found in the cytoplasm. It catalyses the reaction uridine(54) in tRNA + (6R)-5,10-methylene-5,6,7,8-tetrahydrofolate + NADH + H(+) = 5-methyluridine(54) in tRNA + (6S)-5,6,7,8-tetrahydrofolate + NAD(+). It carries out the reaction uridine(54) in tRNA + (6R)-5,10-methylene-5,6,7,8-tetrahydrofolate + NADPH + H(+) = 5-methyluridine(54) in tRNA + (6S)-5,6,7,8-tetrahydrofolate + NADP(+). Catalyzes the folate-dependent formation of 5-methyl-uridine at position 54 (M-5-U54) in all tRNAs. This chain is Methylenetetrahydrofolate--tRNA-(uracil-5-)-methyltransferase TrmFO, found in Methylorubrum extorquens (strain PA1) (Methylobacterium extorquens).